The sequence spans 256 residues: Phosphonates import ATP-binding protein PhnC (256 aa).

Positions 7–251 constitute an ABC transporter domain; it reads IEMKNVTKVY…VFDNIYNGGK (245 aa). ATP is bound at residue 40-47; that stretch reads GLSGAGKS.

Belongs to the ABC transporter superfamily. Phosphonates importer (TC 3.A.1.9.1) family. In terms of assembly, the complex is composed of two ATP-binding proteins (PhnC), two transmembrane proteins (PhnE) and a solute-binding protein (PhnD).

It localises to the cell membrane. It carries out the reaction phosphonate(out) + ATP + H2O = phosphonate(in) + ADP + phosphate + H(+). In terms of biological role, part of the ABC transporter complex PhnCDE involved in phosphonates import. Responsible for energy coupling to the transport system. In Lactobacillus delbrueckii subsp. bulgaricus (strain ATCC 11842 / DSM 20081 / BCRC 10696 / JCM 1002 / NBRC 13953 / NCIMB 11778 / NCTC 12712 / WDCM 00102 / Lb 14), this protein is Phosphonates import ATP-binding protein PhnC.